An 83-amino-acid polypeptide reads, in one-letter code: CDC42 small effector protein 2 (83 aa).

Residues Cys-10 and Cys-11 are each lipidated (S-palmitoyl cysteine). The CRIB domain occupies 28–41 (IGEPTNFVHTAHVG). Phosphoserine is present on residues Ser-42 and Ser-51.

This sequence belongs to the CDC42SE/SPEC family. As to quaternary structure, interacts with CDC42 (in GTP-bound form). Interacts weakly with RAC1 and not at all with RHOA.

Its subcellular location is the cytoplasm. It is found in the cytoskeleton. The protein resides in the cell membrane. It localises to the cell projection. The protein localises to the phagocytic cup. Probably involved in the organization of the actin cytoskeleton by acting downstream of CDC42, inducing actin filament assembly. Alters CDC42-induced cell shape changes. In activated T-cells, may play a role in CDC42-mediated F-actin accumulation at the immunological synapse. May play a role in early contractile events in phagocytosis in macrophages. This is CDC42 small effector protein 2 (Cdc42se2) from Rattus norvegicus (Rat).